The sequence spans 296 residues: Probable endonuclease 4 (296 aa).

Residues histidine 68, histidine 109, glutamate 144, aspartate 178, histidine 181, histidine 213, aspartate 226, histidine 228, and glutamate 258 each coordinate Zn(2+).

The protein belongs to the AP endonuclease 2 family. Zn(2+) serves as cofactor.

The enzyme catalyses Endonucleolytic cleavage to 5'-phosphooligonucleotide end-products.. In terms of biological role, endonuclease IV plays a role in DNA repair. It cleaves phosphodiester bonds at apurinic or apyrimidinic (AP) sites, generating a 3'-hydroxyl group and a 5'-terminal sugar phosphate. The chain is Probable endonuclease 4 from Staphylococcus aureus (strain MRSA252).